The sequence spans 315 residues: Three-prime repair exonuclease 1 (315 aa).

2 residues coordinate Mg(2+): Asp-18 and Glu-20. 20–21 provides a ligand contact to substrate; it reads EA. Ser-78 bears the Phosphoserine mark. Tyr-129 is a substrate binding site. At Ser-167 the chain carries Phosphoserine. Residue His-195 is the Proton donor/acceptor of the active site. Asp-200 contributes to the Mg(2+) binding site. Residue Asp-200 coordinates substrate. The necessary for endoplasmic reticulum localization stretch occupies residues 236-315; it reads TTSTGTNPRP…YGLSLAMPGQ (80 aa). Residues 243 to 315 are interaction with UBQLN1; the sequence is PRPSAVTATV…YGLSLAMPGQ (73 aa). A disordered region spans residues 256 to 282; it reads RASDTGPNLRGDRSPKPAPSPKMCPGA. The segment covering 271-282 has biased composition (pro residues); sequence KPAPSPKMCPGA. A necessary for cytoplasmic retention region spans residues 282–315; that stretch reads APPGEGLLAPLGLLAFLTLAVAMLYGLSLAMPGQ.

It belongs to the exonuclease superfamily. TREX family. In terms of assembly, homodimer. Interacts (via proline-rich region) with TCERG1/CA150 (via the second WW domain). Component of the SET complex, composed of at least ANP32A, APEX1, HMGB2, NME1, SET and TREX1. Within this complex, directly interacts with SET; this interaction does not result in TREX1 inhibition. Also interacts with NME1, but only following translocation to the nucleus. Directly interacts with UBQLN1 (via ubiquitin-like domain); the interaction may control TREX1 subcellular location. Requires Mg(2+) as cofactor. In terms of processing, ubiquitinated, but not targeted to proteasomal degradation. Ubiquitination may be important for interaction with UBQLN1.

It localises to the nucleus. The protein resides in the cytoplasm. Its subcellular location is the cytosol. It is found in the endoplasmic reticulum membrane. The enzyme catalyses Exonucleolytic cleavage in the 3'- to 5'-direction to yield nucleoside 5'-phosphates.. Functionally, major cellular 3'-to-5' DNA exonuclease which digests single-stranded DNA (ssDNA) and double-stranded DNA (dsDNA) with mismatched 3' termini. Prevents cell-intrinsic initiation of autoimmunity. Acts by metabolizing DNA fragments from endogenous retroelements, including L1, LTR and SINE elements. Plays a key role in degradation of DNA fragments at cytosolic micronuclei arising from genome instability: its association with the endoplasmic reticulum membrane directs TREX1 to ruptured micronuclei, leading to micronuclear DNA degradation. Micronuclear DNA degradation is required to limit CGAS activation and subsequent inflammation. Unless degraded, these DNA fragments accumulate in the cytosol and activate the cGAS-STING innate immune signaling, leading to the production of type I interferon. Prevents chronic ATM-dependent checkpoint activation, by processing ssDNA polynucleotide species arising from the processing of aberrant DNA replication intermediates. Inefficiently degrades oxidized DNA, such as that generated upon antimicrobial reactive oxygen production or upon absorption of UV light. During GZMA-mediated cell death, contributes to DNA damage in concert with NME1. NME1 nicks one strand of DNA and TREX1 removes bases from the free 3' end to enhance DNA damage and prevent DNA end reannealing and rapid repair. This chain is Three-prime repair exonuclease 1, found in Bos taurus (Bovine).